Reading from the N-terminus, the 474-residue chain is tRNA (guanine(37)-N(1))-methyltransferase (474 aa).

S-adenosyl-L-methionine contacts are provided by residues H234, 274–275 (DL), 303–304 (DA), and N345. Residues 452 to 464 (EPEAQCESEEAEE) show a composition bias toward acidic residues. A disordered region spans residues 452-474 (EPEAQCESEEAEEPSSKRIKVDT). Over residues 465-474 (PSSKRIKVDT) the composition is skewed to basic and acidic residues.

The protein belongs to the class I-like SAM-binding methyltransferase superfamily. TRM5/TYW2 family. Monomer.

Its subcellular location is the mitochondrion matrix. The protein localises to the nucleus. It is found in the cytoplasm. It carries out the reaction guanosine(37) in tRNA + S-adenosyl-L-methionine = N(1)-methylguanosine(37) in tRNA + S-adenosyl-L-homocysteine + H(+). Specifically methylates the N1 position of guanosine-37 in various cytoplasmic and mitochondrial tRNAs. Methylation is not dependent on the nature of the nucleoside 5' of the target nucleoside. This is the first step in the biosynthesis of wybutosine (yW), a modified base adjacent to the anticodon of tRNAs and required for accurate decoding. The polypeptide is tRNA (guanine(37)-N(1))-methyltransferase (Caenorhabditis elegans).